Reading from the N-terminus, the 376-residue chain is 23S rRNA (uracil(747)-C(5))-methyltransferase RlmC (376 aa).

Residues Cys3, Cys11, Cys14, and Cys88 each coordinate [4Fe-4S] cluster. Gln213, Phe242, Glu263, and Asn308 together coordinate S-adenosyl-L-methionine. The active-site Nucleophile is the Cys335.

Belongs to the class I-like SAM-binding methyltransferase superfamily. RNA M5U methyltransferase family. RlmC subfamily.

It catalyses the reaction uridine(747) in 23S rRNA + S-adenosyl-L-methionine = 5-methyluridine(747) in 23S rRNA + S-adenosyl-L-homocysteine + H(+). Its function is as follows. Catalyzes the formation of 5-methyl-uridine at position 747 (m5U747) in 23S rRNA. This chain is 23S rRNA (uracil(747)-C(5))-methyltransferase RlmC, found in Vibrio vulnificus (strain CMCP6).